We begin with the raw amino-acid sequence, 347 residues long: MIKLFSLFIYLYLISNLKLINTINNTPVIGILTQPFPSSINIKYGDNYLMASYVKYVESAGARVVPIFYNQDDESLTTIFKQINGILLPGGDVDFKTEIQYVKTLTLIWDYVLDVNINGDYFPLWGTCLGLEEIVSLQAESFDVLTDFNAENYSIPLNFSNIALESKIMKNCPTNIINSLANDPITMNNHHFGISPNTFDNNSLLNQFFNVLATNNDKSGNEFISLIESKDYPIYAIIWHPEKSPYSWYSKDATDHSFNAILACQYMSNFFVNETRKSNHKFNDEEVLFKSLIYNYNPTYTFKETHVEQIYIFNTSTNNTKNDFNINQIFSKKLFIIIFILIILFFK.

The signal sequence occupies residues 1–22 (MIKLFSLFIYLYLISNLKLINT). Residues 23 to 314 (INNTPVIGIL…THVEQIYIFN (292 aa)) enclose the Gamma-glutamyl hydrolase domain. C128 acts as the Nucleophile in catalysis. Residues N152, N158, and N201 are each glycosylated (N-linked (GlcNAc...) asparagine). H240 (proton donor) is an active-site residue. Residues N273, N314, and N318 are each glycosylated (N-linked (GlcNAc...) asparagine).

It belongs to the peptidase C26 family.

It is found in the secreted. Its subcellular location is the extracellular space. It catalyses the reaction (6S)-5,6,7,8-tetrahydrofolyl-(gamma-L-Glu)(n) + (n-1) H2O = (6S)-5,6,7,8-tetrahydrofolate + (n-1) L-glutamate. The sequence is that of Gamma-glutamyl hydrolase B (gghB) from Dictyostelium discoideum (Social amoeba).